The sequence spans 335 residues: Tryptophan--tRNA ligase (335 aa).

Residues 11-13 and 19-20 contribute to the ATP site; these read QPT and GN. The short motif at 12–20 is the 'HIGH' region element; it reads PTGNLHLGN. Asp-135 provides a ligand contact to L-tryptophan. Residues 147–149, Val-189, and 198–202 contribute to the ATP site; these read GED and KMSKS. Positions 198 to 202 match the 'KMSKS' region motif; the sequence is KMSKS.

The protein belongs to the class-I aminoacyl-tRNA synthetase family. In terms of assembly, homodimer.

The protein localises to the cytoplasm. It carries out the reaction tRNA(Trp) + L-tryptophan + ATP = L-tryptophyl-tRNA(Trp) + AMP + diphosphate + H(+). Its function is as follows. Catalyzes the attachment of tryptophan to tRNA(Trp). The polypeptide is Tryptophan--tRNA ligase (Nostoc sp. (strain PCC 7120 / SAG 25.82 / UTEX 2576)).